Reading from the N-terminus, the 187-residue chain is Threonylcarbamoyl-AMP synthase (187 aa).

The YrdC-like domain maps to 4-187; it reads TLTLSEAVTA…DARSGHILRL (184 aa).

It belongs to the SUA5 family. TsaC subfamily.

The protein resides in the cytoplasm. It carries out the reaction L-threonine + hydrogencarbonate + ATP = L-threonylcarbamoyladenylate + diphosphate + H2O. Required for the formation of a threonylcarbamoyl group on adenosine at position 37 (t(6)A37) in tRNAs that read codons beginning with adenine. Catalyzes the conversion of L-threonine, HCO(3)(-)/CO(2) and ATP to give threonylcarbamoyl-AMP (TC-AMP) as the acyladenylate intermediate, with the release of diphosphate. This is Threonylcarbamoyl-AMP synthase from Xylella fastidiosa (strain 9a5c).